Reading from the N-terminus, the 167-residue chain is Protein-export protein SecB (167 aa).

Belongs to the SecB family. Homotetramer, a dimer of dimers. One homotetramer interacts with 1 SecA dimer.

The protein localises to the cytoplasm. In terms of biological role, one of the proteins required for the normal export of preproteins out of the cell cytoplasm. It is a molecular chaperone that binds to a subset of precursor proteins, maintaining them in a translocation-competent state. It also specifically binds to its receptor SecA. The protein is Protein-export protein SecB of Idiomarina loihiensis (strain ATCC BAA-735 / DSM 15497 / L2-TR).